Consider the following 254-residue polypeptide: E3 ubiquitin-protein ligase NEURL3 (254 aa).

In terms of domain architecture, NHR spans Ala17–Pro174. Residues Cys197–Arg236 form an RING-type zinc finger.

The protein localises to the cytoplasm. It carries out the reaction S-ubiquitinyl-[E2 ubiquitin-conjugating enzyme]-L-cysteine + [acceptor protein]-L-lysine = [E2 ubiquitin-conjugating enzyme]-L-cysteine + N(6)-ubiquitinyl-[acceptor protein]-L-lysine.. Its pathway is protein modification; protein ubiquitination. E3 ubiquitin-protein ligase that plays a role in various biological processes such as lung development or innate immunity. Seems to utilize UBE2E1. Promotes innate antiviral response by catalyzing 'Lys-63'-linked ubiquitination of IRF7. Also inhibits hepatitis C virus assembly by directly binding to viral E1 envelope glycoprotein to disrupt its interaction with E2. Plays an essential role in TLR4-mediated activation of MAPK pathways by promoting 'Lys-48'-linked polyubiquitination of the phosphatase DUSP1/MKP1. This chain is E3 ubiquitin-protein ligase NEURL3 (Neurl3), found in Rattus norvegicus (Rat).